Reading from the N-terminus, the 217-residue chain is Probable glutathione S-transferase DHAR4 (217 aa).

2 residues coordinate glutathione: Lys8 and Asp19. Residues Lys8 and Asp19 each contribute to the L-ascorbate site. Residues 10 to 85 form the GST N-terminal domain; it reads ASGAPDVLGD…DLIVGIIEEK (76 aa). The active-site Nucleophile is the Cys20. The short motif at 20 to 25 is the Glutathione-binding element; that stretch reads CPFGQR. Positions 47, 75, 164, and 211 each coordinate glutathione. A GST C-terminal domain is found at 86-217; that stretch reads YPEPSLVTFP…IASWAPKLDV (132 aa). Lys214 is an L-ascorbate binding site.

This sequence belongs to the GST superfamily. DHAR family. In terms of assembly, monomer.

It is found in the cytoplasm. Its subcellular location is the cytosol. It carries out the reaction RX + glutathione = an S-substituted glutathione + a halide anion + H(+). The catalysed reaction is L-dehydroascorbate + 2 glutathione = glutathione disulfide + L-ascorbate. Exhibits glutathione-dependent thiol transferase and dehydroascorbate (DHA) reductase activities. This Arabidopsis thaliana (Mouse-ear cress) protein is Probable glutathione S-transferase DHAR4 (DHAR4).